Here is a 426-residue protein sequence, read N- to C-terminus: Serine--tRNA ligase (426 aa).

233–235 (TSE) is a binding site for L-serine. 264 to 266 (RAE) provides a ligand contact to ATP. Position 287 (glutamate 287) interacts with L-serine. 351-354 (EISS) contributes to the ATP binding site. Position 387 (serine 387) interacts with L-serine.

It belongs to the class-II aminoacyl-tRNA synthetase family. Type-1 seryl-tRNA synthetase subfamily. Homodimer. The tRNA molecule binds across the dimer.

The protein localises to the cytoplasm. The catalysed reaction is tRNA(Ser) + L-serine + ATP = L-seryl-tRNA(Ser) + AMP + diphosphate + H(+). It carries out the reaction tRNA(Sec) + L-serine + ATP = L-seryl-tRNA(Sec) + AMP + diphosphate + H(+). It participates in aminoacyl-tRNA biosynthesis; selenocysteinyl-tRNA(Sec) biosynthesis; L-seryl-tRNA(Sec) from L-serine and tRNA(Sec): step 1/1. In terms of biological role, catalyzes the attachment of serine to tRNA(Ser). Is also able to aminoacylate tRNA(Sec) with serine, to form the misacylated tRNA L-seryl-tRNA(Sec), which will be further converted into selenocysteinyl-tRNA(Sec). The protein is Serine--tRNA ligase of Xanthomonas euvesicatoria pv. vesicatoria (strain 85-10) (Xanthomonas campestris pv. vesicatoria).